An 88-amino-acid polypeptide reads, in one-letter code: Small ribosomal subunit protein bS20 (88 aa).

The segment at 1 to 20 is disordered; it reads MPNIKSAIKRTKTNNERRAH.

Belongs to the bacterial ribosomal protein bS20 family.

In terms of biological role, binds directly to 16S ribosomal RNA. The polypeptide is Small ribosomal subunit protein bS20 (Bacillus velezensis (strain DSM 23117 / BGSC 10A6 / LMG 26770 / FZB42) (Bacillus amyloliquefaciens subsp. plantarum)).